The following is a 325-amino-acid chain: Beta-ketoacyl-[acyl-carrier-protein] synthase III (325 aa).

Residues C119 and H252 contribute to the active site. The segment at 253–257 (QANIR) is ACP-binding. Residue N282 is part of the active site.

Belongs to the thiolase-like superfamily. FabH family. In terms of assembly, homodimer.

The protein resides in the cytoplasm. The catalysed reaction is malonyl-[ACP] + acetyl-CoA + H(+) = 3-oxobutanoyl-[ACP] + CO2 + CoA. It functions in the pathway lipid metabolism; fatty acid biosynthesis. Its function is as follows. Catalyzes the condensation reaction of fatty acid synthesis by the addition to an acyl acceptor of two carbons from malonyl-ACP. Catalyzes the first condensation reaction which initiates fatty acid synthesis and may therefore play a role in governing the total rate of fatty acid production. Possesses both acetoacetyl-ACP synthase and acetyl transacylase activities. Its substrate specificity determines the biosynthesis of branched-chain and/or straight-chain of fatty acids. The polypeptide is Beta-ketoacyl-[acyl-carrier-protein] synthase III (Polaromonas sp. (strain JS666 / ATCC BAA-500)).